A 491-amino-acid polypeptide reads, in one-letter code: Putative diacyglycerol O-acyltransferase MT2557 (491 aa).

Catalysis depends on histidine 145, which acts as the Proton acceptor.

It belongs to the long-chain O-acyltransferase family.

It carries out the reaction an acyl-CoA + a 1,2-diacyl-sn-glycerol = a triacyl-sn-glycerol + CoA. It functions in the pathway glycerolipid metabolism; triacylglycerol biosynthesis. This Mycobacterium tuberculosis (strain CDC 1551 / Oshkosh) protein is Putative diacyglycerol O-acyltransferase MT2557.